A 118-amino-acid chain; its full sequence is Large ribosomal subunit protein uL18 (118 aa).

The protein belongs to the universal ribosomal protein uL18 family. In terms of assembly, part of the 50S ribosomal subunit; part of the 5S rRNA/L5/L18/L25 subcomplex. Contacts the 5S and 23S rRNAs.

In terms of biological role, this is one of the proteins that bind and probably mediate the attachment of the 5S RNA into the large ribosomal subunit, where it forms part of the central protuberance. This chain is Large ribosomal subunit protein uL18, found in Rhizorhabdus wittichii (strain DSM 6014 / CCUG 31198 / JCM 15750 / NBRC 105917 / EY 4224 / RW1) (Sphingomonas wittichii).